The chain runs to 78 residues: Large ribosomal subunit protein bL28 (78 aa).

The protein belongs to the bacterial ribosomal protein bL28 family.

This chain is Large ribosomal subunit protein bL28, found in Edwardsiella ictaluri (strain 93-146).